The following is a 217-amino-acid chain: ATP-dependent Clp protease proteolytic subunit (217 aa).

The Nucleophile role is filled by Ser120. Residue His145 is part of the active site.

The protein belongs to the peptidase S14 family. Fourteen ClpP subunits assemble into 2 heptameric rings which stack back to back to give a disk-like structure with a central cavity, resembling the structure of eukaryotic proteasomes.

Its subcellular location is the cytoplasm. It carries out the reaction Hydrolysis of proteins to small peptides in the presence of ATP and magnesium. alpha-casein is the usual test substrate. In the absence of ATP, only oligopeptides shorter than five residues are hydrolyzed (such as succinyl-Leu-Tyr-|-NHMec, and Leu-Tyr-Leu-|-Tyr-Trp, in which cleavage of the -Tyr-|-Leu- and -Tyr-|-Trp bonds also occurs).. Functionally, cleaves peptides in various proteins in a process that requires ATP hydrolysis. Has a chymotrypsin-like activity. Plays a major role in the degradation of misfolded proteins. The protein is ATP-dependent Clp protease proteolytic subunit of Ralstonia nicotianae (strain ATCC BAA-1114 / GMI1000) (Ralstonia solanacearum).